Here is a 202-residue protein sequence, read N- to C-terminus: Holliday junction resolvase RecU (202 aa).

Mg(2+) is bound by residues T85, D87, E100, and Q119.

It belongs to the RecU family. Requires Mg(2+) as cofactor.

It localises to the cytoplasm. The enzyme catalyses Endonucleolytic cleavage at a junction such as a reciprocal single-stranded crossover between two homologous DNA duplexes (Holliday junction).. In terms of biological role, endonuclease that resolves Holliday junction intermediates in genetic recombination. Cleaves mobile four-strand junctions by introducing symmetrical nicks in paired strands. Promotes annealing of linear ssDNA with homologous dsDNA. Required for DNA repair, homologous recombination and chromosome segregation. The sequence is that of Holliday junction resolvase RecU from Streptococcus equi subsp. zooepidemicus (strain MGCS10565).